The following is a 154-amino-acid chain: 6,7-dimethyl-8-ribityllumazine synthase (154 aa).

5-amino-6-(D-ribitylamino)uracil is bound by residues tryptophan 22, 56–58, and 80–82; these read AWE and CVI. Residue 85 to 86 participates in (2S)-2-hydroxy-3-oxobutyl phosphate binding; sequence DT. Residue histidine 88 is the Proton donor of the active site. Asparagine 113 is a binding site for 5-amino-6-(D-ribitylamino)uracil. Position 127 (arginine 127) interacts with (2S)-2-hydroxy-3-oxobutyl phosphate.

It belongs to the DMRL synthase family. In terms of assembly, forms an icosahedral capsid composed of 60 subunits, arranged as a dodecamer of pentamers.

The catalysed reaction is (2S)-2-hydroxy-3-oxobutyl phosphate + 5-amino-6-(D-ribitylamino)uracil = 6,7-dimethyl-8-(1-D-ribityl)lumazine + phosphate + 2 H2O + H(+). Its pathway is cofactor biosynthesis; riboflavin biosynthesis; riboflavin from 2-hydroxy-3-oxobutyl phosphate and 5-amino-6-(D-ribitylamino)uracil: step 1/2. Its function is as follows. Catalyzes the formation of 6,7-dimethyl-8-ribityllumazine by condensation of 5-amino-6-(D-ribitylamino)uracil with 3,4-dihydroxy-2-butanone 4-phosphate. This is the penultimate step in the biosynthesis of riboflavin. The protein is 6,7-dimethyl-8-ribityllumazine synthase of Xanthomonas campestris pv. campestris (strain 8004).